We begin with the raw amino-acid sequence, 355 residues long: 3-dehydroquinate synthase (355 aa).

Residues 105–109 (GVVGD), 129–130 (TS), K142, K151, and 169–172 (TLKT) each bind NAD(+). Residues E184, H246, and H263 each contribute to the Zn(2+) site.

The protein belongs to the sugar phosphate cyclases superfamily. Dehydroquinate synthase family. It depends on NAD(+) as a cofactor. Co(2+) serves as cofactor. Requires Zn(2+) as cofactor.

The protein resides in the cytoplasm. The enzyme catalyses 7-phospho-2-dehydro-3-deoxy-D-arabino-heptonate = 3-dehydroquinate + phosphate. Its pathway is metabolic intermediate biosynthesis; chorismate biosynthesis; chorismate from D-erythrose 4-phosphate and phosphoenolpyruvate: step 2/7. Functionally, catalyzes the conversion of 3-deoxy-D-arabino-heptulosonate 7-phosphate (DAHP) to dehydroquinate (DHQ). The protein is 3-dehydroquinate synthase of Streptococcus agalactiae serotype III (strain NEM316).